The chain runs to 226 residues: E3 ubiquitin-protein ligase RNF186 (226 aa).

An RING-type zinc finger spans residues 39 to 85 (CLVCREPYNCARSPKLLSCQHTFCAVCLKLLLYVQEDTWSIPCPLCR). The next 2 helical transmembrane spans lie at 157 to 177 (HLLL…PGVI) and 179 to 199 (WVLA…CCHP).

In terms of assembly, interacts with BNIP1. Post-translationally, polyubiquitinated. 'Lys-29'-linked autoubiquitination leads to proteasomal degradation.

It is found in the endoplasmic reticulum membrane. The catalysed reaction is S-ubiquitinyl-[E2 ubiquitin-conjugating enzyme]-L-cysteine + [acceptor protein]-L-lysine = [E2 ubiquitin-conjugating enzyme]-L-cysteine + N(6)-ubiquitinyl-[acceptor protein]-L-lysine.. Its pathway is protein modification; protein ubiquitination. Its function is as follows. E3 ubiquitin protein ligase that is part of an apoptotic signaling pathway activated by endoplasmic reticulum stress. Stimulates the expression of proteins specific of the unfolded protein response (UPR), ubiquitinates BNIP1 and regulates its localization to the mitochondrion and induces calcium release from the endoplasmic reticulum that ultimately leads to cell apoptosis. Plays a role in the maintenance of intestinal homeostasis and clearance of enteric pathogens. Upon NOD2 stimulation, ubiquitinates the ER stress sensor activating transcription factor 6/ATF6 and promotes the unfolded protein response UPR. Participates in basal level of autophagy maintenance by regulating the ubiquitination of EPHB2. Upon stimulation by ligand EFNB1, ubiquitinates EPHB2 and further recruits MAP1LC3B for autophagy induction. Controls nutrient sensing by ubiquitinating Sestrin-2/SESN2, which is an intracellular sensor of cytosolic leucine and inhibitor of mTORC1 activity. The protein is E3 ubiquitin-protein ligase RNF186 of Mus musculus (Mouse).